A 155-amino-acid polypeptide reads, in one-letter code: uncharacterized protein (155 aa).

Positions 1–23 are cleaved as a signal peptide; that stretch reads MRLMRNLMNALLLGAAASSLAVA. Cys-86 and Cys-91 form a disulfide bridge.

The protein belongs to the ivy family.

It localises to the periplasm. This is an uncharacterized protein from Pseudomonas aeruginosa (strain ATCC 15692 / DSM 22644 / CIP 104116 / JCM 14847 / LMG 12228 / 1C / PRS 101 / PAO1).